The chain runs to 273 residues: NAD-dependent protein deacylase (273 aa).

The 253-residue stretch at 20 to 272 (RERLRQRIFF…PEFVEKLLKG (253 aa)) folds into the Deacetylase sirtuin-type domain. 48–67 (GAGISAESGIRTFRAADGLW) serves as a coordination point for NAD(+). Residues Tyr92 and Arg95 each coordinate substrate. Residue 129–132 (QNID) participates in NAD(+) binding. His147 acts as the Proton acceptor in catalysis. Residues Cys155 and Cys174 each contribute to the Zn(2+) site. NAD(+) is bound by residues 214–216 (GTS), 240–242 (NLE), and Ala258.

The protein belongs to the sirtuin family. Class III subfamily. Requires Zn(2+) as cofactor.

The protein localises to the cytoplasm. It carries out the reaction N(6)-acetyl-L-lysyl-[protein] + NAD(+) + H2O = 2''-O-acetyl-ADP-D-ribose + nicotinamide + L-lysyl-[protein]. The enzyme catalyses N(6)-succinyl-L-lysyl-[protein] + NAD(+) + H2O = 2''-O-succinyl-ADP-D-ribose + nicotinamide + L-lysyl-[protein]. It catalyses the reaction N(6)-(2-hydroxyisobutanoyl)-L-lysyl-[protein] + NAD(+) + H2O = 2''-O-(2-hydroxyisobutanoyl)-ADP-D-ribose + nicotinamide + L-lysyl-[protein]. NAD-dependent lysine deacetylase that specifically removes acetyl groups on target proteins. Also acts as a protein-lysine deacylase by mediating protein desuccinylation and de-2-hydroxyisobutyrylation. Modulates the activities of several proteins which are inactive in their acylated form. This Escherichia coli O6:H1 (strain CFT073 / ATCC 700928 / UPEC) protein is NAD-dependent protein deacylase.